The chain runs to 156 residues: MLYKNINEFEQVIDKTKRIMCLDFGEKKIGVALSDKTNLIAIPHSVYVRKNTRKDLGGLYGILIENDAGSMVIGLPLDLFGMGNELCDKVMLFANRMIKKYAINIYLHDERYSTAMATRVAKLANIKRKESQKIDDKIAAVLILQQVLDMVKIYQM.

This sequence belongs to the YqgF nuclease family.

The protein resides in the cytoplasm. In terms of biological role, could be a nuclease involved in processing of the 5'-end of pre-16S rRNA. This is Putative pre-16S rRNA nuclease from Ehrlichia ruminantium (strain Gardel).